Here is a 72-residue protein sequence, read N- to C-terminus: UPF0270 protein YheU (72 aa).

It belongs to the UPF0270 family.

This chain is UPF0270 protein YheU, found in Shigella dysenteriae serotype 1 (strain Sd197).